The chain runs to 368 residues: Propane 2-monooxygenase, hydroxylase component small subunit (368 aa).

Positions 1–17 (MSAPEKPRERSFPKIEF) are enriched in basic and acidic residues. Residues 1-32 (MSAPEKPRERSFPKIEFTDSEAGAKEFPSSKS) form a disordered region.

Belongs to the TmoE/XamoE family. As to quaternary structure, the propane 2-monooxygenase multicomponent enzyme system is composed of an electron transfer component and a monooxygenase component interacting with the effector protein MimD. The electron transfer component is composed of a reductase (MimB), and the monooxygenase component is formed by a large subunit (MimA) and a small subunit (MimC). Requires the presence of the chaperonin-like protein MimG to ensure a productive folding, resulting of a soluble MimC, which leads to the active form of MimABCD.

It carries out the reaction propane + NADH + O2 + H(+) = propan-2-ol + NAD(+) + H2O. The catalysed reaction is acetone + NADH + O2 + H(+) = hydroxyacetone + NAD(+) + H2O. It catalyses the reaction butan-2-one + NADH + O2 + H(+) = 1-hydroxy-2-butanone + NAD(+) + H2O. The enzyme catalyses phenol + NADH + O2 + H(+) = hydroquinone + NAD(+) + H2O. Functionally, component of the propane 2-monooxygenase multicomponent enzyme system which is involved in the degradation of propane via the O2-dependent hydroxylation of propane. Also involved in the degradation of acetone via the O2-dependent hydroxylation of acetone. Also able to catalyze the oxidation of phenol, methylethylketone (2-butanone), 1-propanol and 2-propanol. The polypeptide is Propane 2-monooxygenase, hydroxylase component small subunit (Mycolicibacterium smegmatis (strain ATCC 700084 / mc(2)155) (Mycobacterium smegmatis)).